The primary structure comprises 237 residues: Lectin alpha chain (237 aa).

Mn(2+) is bound by residues Glu-8 and Asp-10. Ca(2+) is bound by residues Asp-10, Tyr-12, Asn-14, and Asp-19. Tyr-12 contacts a carbohydrate. Residues Asp-19 and His-24 each coordinate Mn(2+). Residue 99–100 (LY) participates in a carbohydrate binding. Asp-208 contributes to the Ca(2+) binding site. Arg-228 is a binding site for a carbohydrate.

It belongs to the leguminous lectin family. In terms of assembly, equilibrium between homodimer and homotetramer. Oligomerization is pH-dependent with homotetramers forming at pH 6.5 and above. In terms of processing, the beta and gamma chains are produced by partial proteolytic processing of the lectin alpha chain by an asparaginyl endopeptidase. Mixture of 60% alpha lectin and 40% of its beta and gamma proteolytic fragments. As to expression, seed.

It is found in the vacuole. The protein localises to the aleurone grain. In terms of biological role, D-mannose/D-glucose-binding lectin. Has anti-inflammatory activity in rats. Induces histamine release in mast cells from hamster and rat. Induces lymphocyte proliferation and IFNG production. Shows toxicity against the aquatic snail B.glabrata at concentrations higher than 20 ug/ml. This Dioclea virgata protein is Lectin alpha chain.